The primary structure comprises 744 residues: Prestin (744 aa).

At 1–75 (MDHAEENEIP…PITKWLPAYK (75 aa)) the chain is on the cytoplasmic side. A helical membrane pass occupies residues 76 to 104 (FKEYVLGDLVSGISTGVLQLPQGLAFAML). At 105 to 108 (AAVP) the chain is on the extracellular side. The chain crosses the membrane as a helical span at residues 109 to 126 (PVFGLYSSFYPVIMYCFF). Over 127–137 (GTSRHISIGPF) the chain is Cytoplasmic. Residues 138–149 (AVISLMIGGVAV) traverse the membrane as a helical segment. The Extracellular segment spans residues 150–168 (RLVPDDIVIPGGVNATNGT). Residues 158–168 (IPGGVNATNGT) carry the Involved in motor function motif. 2 N-linked (GlcNAc...) asparagine glycosylation sites follow: Asn163 and Asn166. The chain crosses the membrane as a helical span at residues 169-196 (EARDALRVKVAMSVTLLSGIIQFCLGVC). Topologically, residues 197 to 206 (RFGFVAIYLT) are cytoplasmic. Residues 207-230 (EPLVRGFTTAAAVHVFTSMLKYLF) form a helical membrane-spanning segment. Residues 231–241 (GVKTKRYSGIF) lie on the Extracellular side of the membrane. The segment at residues 242–253 (SVVYSTVAVLQN) is an intramembrane region (helical). The Extracellular segment spans residues 254 to 258 (VKNLN). Residues 259-276 (VCSLGVGLMVFGLLLGGK) traverse the membrane as a helical segment. Topologically, residues 277-291 (EFNERFKEKLPAPIP) are cytoplasmic. A helical transmembrane segment spans residues 292 to 307 (LEFFAVVMGTGISAGF). The Extracellular segment spans residues 308–332 (NLHESYSVDVVGTLPLGLLPPANPD). A helical transmembrane segment spans residues 333-359 (TSLFHLVYVDAIAIAIVGFSVTISMAK). Residues 360–370 (TLANKHGYQVD) lie on the Cytoplasmic side of the membrane. Residues 371-388 (GNQELIALGICNSIGSLF) traverse the membrane as a helical segment. The Extracellular portion of the chain corresponds to 389–396 (QTFSISCS). A helical membrane pass occupies residues 397–406 (LSRSLVQEGT). Residue Ser398 coordinates salicylate. Topologically, residues 407 to 410 (GGKT) are cytoplasmic. The chain crosses the membrane as a helical span at residues 411 to 431 (QLAGCLASLMILLVILATGFL). Residues 432 to 436 (FESLP) are Extracellular-facing. The helical transmembrane segment at 437–464 (QAVLSAIVIVNLKGMFMQFSDLPFFWRT) threads the bilayer. Position 465 (Ser465) is a topological domain, cytoplasmic. A helical transmembrane segment spans residues 466–481 (KIELTIWLTTFVSSLF). Topologically, residues 482–484 (LGL) are extracellular. The helical transmembrane segment at 485–504 (DYGLITAVIIALLTVIYRTQ) threads the bilayer. The interval 505–718 (SPSYTVLGQL…AVLGSQVREA (214 aa)) is extended region for STAS domain. Over 505–744 (SPSYTVLGQL…PNATPTTPEA (240 aa)) the chain is Cytoplasmic. The STAS domain occupies 525 to 713 (AYEEVKEIPG…HSIHDAVLGS (189 aa)). The interval 720-744 (AEQETTVLPPQEDMEPNATPTTPEA) is disordered.

Belongs to the SLC26A/SulP transporter (TC 2.A.53) family. As to quaternary structure, homodimer. Interacts (via STAS domain) with CALM; this interaction is calcium-dependent and the STAS domain interacts with only one lobe of CALM which is an elongated conformation. Interacts with MYH1. In terms of tissue distribution, specifically expressed in outer hair cells of cochleae (at protein level). Not detected in other cells of the organ of Corti.

The protein localises to the lateral cell membrane. The catalysed reaction is 2 hydrogencarbonate(in) + chloride(out) = 2 hydrogencarbonate(out) + chloride(in). Its activity is regulated as follows. Salicylate, an inhibitor of outer hair cell motility, acts as a competitive antagonist at the prestin anion-binding site. In terms of biological role, voltage-sensitive motor protein that drives outer hair cell (OHC) electromotility (eM) and participates in sound amplification in the hearing organ. Converts changes in the transmembrane electric potential into mechanical displacements resulting in the coupling of its expansion to movement of a charged voltage sensor across the lipid membrane. The nature of the voltage sensor is not completely clear, and two models compete. In the first model, acts as an incomplete transporter where intracellular chloride anion acts as extrinsic voltage sensor that drives conformational change in the protein which is sufficient to produce a length change in the plane of the membrane and hence in the length of the OHC. The second model in which multiple charged amino acid residues are distributed at the intracellular and extracellular membrane interfaces that form an intrinsic voltage sensor, whose movement produces the non-linear capacitance (NLC). However, the effective voltage sensor may be the result of a hybrid voltage sensor assembled from intrinsic charge (charged residues) and extrinsic charge (bound anion). Notably, binding of anions to the anion-binding pocket partially neutralizes the intrinsic positive charge rather than to form an electrically negative sensor, therefore remaining charge may serve as voltage sensor that, after depolarization, moves from down (expanded state) to up (contracted) conformation, which is accompanied by an eccentric contraction of the intermembrane cross-sectional area of the protein as well as a major increase in the hydrophobic thickness of the protein having as consequences the plasma membrane thickening and the cell contraction after membrane depolarization. The anion-binding pocket transits from the inward-open (Down) state, where it is exposed toward the intracellular solvent in the absence of anion, to the occluded (Up) state upon anion binding. Salicylate competes for the anion-binding site and inhibits the voltage-sensor movement, and therefore inhibits the charge transfer and electromotility by displacing Cl(-) from the anion-binding site and by preventing the structural transitions to the contracted state. In addition, can act as a weak Cl(-)/HCO3(-) antiporter across the cell membrane and so regulate the intracellular pH of the outer hair cells (OHCs), while firstly found as being unable to mediate electrogenic anion transport. Moreover, supports a role in cardiac mechanical amplification serving as an elastic element to enhance the actomyosin- based sarcomere contraction system. This Rattus norvegicus (Rat) protein is Prestin.